The following is a 440-amino-acid chain: Translation initiation factor eIF2B subunit gamma (440 aa).

Belongs to the eIF-2B gamma/epsilon subunits family. Component of the translation initiation factor 2B (eIF2B) complex which is a heterodecamer of two sets of five different subunits: alpha, beta, gamma, delta and epsilon. Subunits alpha, beta and delta comprise a regulatory subcomplex and subunits epsilon and gamma comprise a catalytic subcomplex. Within the complex, the hexameric regulatory complex resides at the center, with the two heterodimeric catalytic subcomplexes bound on opposite sides.

Its subcellular location is the cytoplasm. The protein resides in the cytosol. Acts as a component of the translation initiation factor 2B (eIF2B) complex, which catalyzes the exchange of GDP for GTP on the eukaryotic initiation factor 2 (eIF2) complex gamma subunit. Its guanine nucleotide exchange factor activity is repressed when bound to eIF2 complex phosphorylated on the alpha subunit, thereby limiting the amount of methionyl-initiator methionine tRNA available to the ribosome and consequently global translation is repressed. The sequence is that of Translation initiation factor eIF2B subunit gamma (eif2b3) from Dictyostelium discoideum (Social amoeba).